Reading from the N-terminus, the 320-residue chain is Biotin synthase (320 aa).

Residues N45 to R274 form the Radical SAM core domain. The [4Fe-4S] cluster site is built by C60, C64, and C67. [2Fe-2S] cluster is bound by residues C105, C137, C197, and R269.

Belongs to the radical SAM superfamily. Biotin synthase family. Homodimer. It depends on [4Fe-4S] cluster as a cofactor. [2Fe-2S] cluster is required as a cofactor.

The enzyme catalyses (4R,5S)-dethiobiotin + (sulfur carrier)-SH + 2 reduced [2Fe-2S]-[ferredoxin] + 2 S-adenosyl-L-methionine = (sulfur carrier)-H + biotin + 2 5'-deoxyadenosine + 2 L-methionine + 2 oxidized [2Fe-2S]-[ferredoxin]. It participates in cofactor biosynthesis; biotin biosynthesis; biotin from 7,8-diaminononanoate: step 2/2. In terms of biological role, catalyzes the conversion of dethiobiotin (DTB) to biotin by the insertion of a sulfur atom into dethiobiotin via a radical-based mechanism. The protein is Biotin synthase of Beijerinckia indica subsp. indica (strain ATCC 9039 / DSM 1715 / NCIMB 8712).